A 316-amino-acid chain; its full sequence is Ribosomal RNA small subunit methyltransferase H (316 aa).

S-adenosyl-L-methionine contacts are provided by residues 37 to 39 (GGH), aspartate 56, phenylalanine 83, aspartate 106, and histidine 113. Positions 276-316 (PILPSEEETKENPASRSAKLRVLRKTKSADKKYKKENSKEE) are disordered. Residues 302 to 316 (KSADKKYKKENSKEE) are compositionally biased toward basic and acidic residues.

It belongs to the methyltransferase superfamily. RsmH family.

Its subcellular location is the cytoplasm. The enzyme catalyses cytidine(1402) in 16S rRNA + S-adenosyl-L-methionine = N(4)-methylcytidine(1402) in 16S rRNA + S-adenosyl-L-homocysteine + H(+). In terms of biological role, specifically methylates the N4 position of cytidine in position 1402 (C1402) of 16S rRNA. This is Ribosomal RNA small subunit methyltransferase H from Leptospira borgpetersenii serovar Hardjo-bovis (strain L550).